A 611-amino-acid chain; its full sequence is Chaperone protein HtpG (611 aa).

An a; substrate-binding region spans residues 1-326 (MSETLERHAF…TEDLPLNVSR (326 aa)). The tract at residues 327–536 (EMLQATPVLA…SGGPDLQMQR (210 aa)) is b. The tract at residues 537–611 (LLRRAGRGFG…RVATALAAQG (75 aa)) is c.

Belongs to the heat shock protein 90 family. In terms of assembly, homodimer.

It is found in the cytoplasm. Molecular chaperone. Has ATPase activity. In Methylobacterium nodulans (strain LMG 21967 / CNCM I-2342 / ORS 2060), this protein is Chaperone protein HtpG.